A 368-amino-acid polypeptide reads, in one-letter code: Homoserine O-acetyltransferase (368 aa).

Residues 44 to 350 (NAILVAHAWT…AYGHDAFLLE (307 aa)) enclose the AB hydrolase-1 domain. Ser-150 functions as the Nucleophile in the catalytic mechanism. Substrate is bound at residue Arg-217. Active-site residues include Asp-311 and His-344. Residue Asp-345 participates in substrate binding.

This sequence belongs to the AB hydrolase superfamily. MetX family. In terms of assembly, homodimer.

It is found in the cytoplasm. The catalysed reaction is L-homoserine + acetyl-CoA = O-acetyl-L-homoserine + CoA. The protein operates within amino-acid biosynthesis; L-methionine biosynthesis via de novo pathway; O-acetyl-L-homoserine from L-homoserine: step 1/1. Transfers an acetyl group from acetyl-CoA to L-homoserine, forming acetyl-L-homoserine. This Geobacter sulfurreducens (strain ATCC 51573 / DSM 12127 / PCA) protein is Homoserine O-acetyltransferase.